The following is a 338-amino-acid chain: Ketol-acid reductoisomerase (NADP(+)) (338 aa).

The KARI N-terminal Rossmann domain maps to 1 to 181 (MKVFYDKDCD…GGGKAGIIET (181 aa)). NADP(+) is bound by residues 24-27 (YGSQ), R47, and S52. H107 is a catalytic residue. G133 lines the NADP(+) pocket. Positions 182–327 (NFREETETDL…EKLRAMMPWI (146 aa)) constitute a KARI C-terminal knotted domain. Residues D190, E194, E226, and E230 each coordinate Mg(2+). Substrate is bound at residue S251.

Belongs to the ketol-acid reductoisomerase family. The cofactor is Mg(2+).

The enzyme catalyses (2R)-2,3-dihydroxy-3-methylbutanoate + NADP(+) = (2S)-2-acetolactate + NADPH + H(+). The catalysed reaction is (2R,3R)-2,3-dihydroxy-3-methylpentanoate + NADP(+) = (S)-2-ethyl-2-hydroxy-3-oxobutanoate + NADPH + H(+). It functions in the pathway amino-acid biosynthesis; L-isoleucine biosynthesis; L-isoleucine from 2-oxobutanoate: step 2/4. Its pathway is amino-acid biosynthesis; L-valine biosynthesis; L-valine from pyruvate: step 2/4. Functionally, involved in the biosynthesis of branched-chain amino acids (BCAA). Catalyzes an alkyl-migration followed by a ketol-acid reduction of (S)-2-acetolactate (S2AL) to yield (R)-2,3-dihydroxy-isovalerate. In the isomerase reaction, S2AL is rearranged via a Mg-dependent methyl migration to produce 3-hydroxy-3-methyl-2-ketobutyrate (HMKB). In the reductase reaction, this 2-ketoacid undergoes a metal-dependent reduction by NADPH to yield (R)-2,3-dihydroxy-isovalerate. This chain is Ketol-acid reductoisomerase (NADP(+)), found in Polaromonas sp. (strain JS666 / ATCC BAA-500).